Reading from the N-terminus, the 261-residue chain is Aromatic peroxygenase (261 aa).

A heme-binding site is contributed by Cys36. N-linked (GlcNAc...) asparagine glycosylation is found at Asn100, Asn137, Asn141, and Asn220.

The protein belongs to the chloroperoxidase family. It depends on heme b as a cofactor. Post-translationally, N-glycosylated.

In terms of biological role, aromatic peroxidase that oxidizes aryl alcohols into the corresponding aldehydes and then into the corresponding benzoic acids. Catalyzes the regioselective peroxide-dependent hydroxylation of naphthalene to 1-naphthol and to a far lesser extent 2-naphthol via a naphthalene 1,2-oxide intermediate. Halogenates phenol to 2-bromophenol and 4-bromophenol. Oxidizes the sulfur-containing heterocycle dibenzothiophene to yield sulfoxidation products, and trace amounts of ring-hydroxylation products. This chain is Aromatic peroxygenase, found in Coprinellus radians (Coprophilous mushroom).